A 487-amino-acid polypeptide reads, in one-letter code: MPNSMWHQCLEVLRDEFPAQQFNTWLRPLQSDHREGQLMLFAPNRFVMDWVNEKYLRRIEEVLKDLNGGQAPRVMMKVGSAPKPTDPVVRSEVAPPVRVSEETEQTVTEEERSVAATVADSAPRAMSAPAPKAQAERRPVQVEGDIKHQSFLNETFTFDTFVEGKSNQLARAASMQVAENPGGAYNPLFLYGGVGLGKTHLMHAIGNEIVRRNPRAKVAYLRSERFVADMVKALQLNAINEFKRYYRSVDALLIDDIQFFARKERSQEEFFHTFNALLEGGQQVIVTCDRFPKEISDMEERLKSRFGWGLTVMVEPPELETRVAILMKKAEQANVKLSSEAAFFIAQKIRSNVRELEGALRLVIANAHFTGSEITPPFIRESLKDLLALHEKQVSIDNIQRTVAEYYKIKVADLLSKRRTRTVTRPRQVAMSLAKELTNHSLPEIGDAFGGRDHTTVLHACKKIVELQETDPGIREDYQNFMRLLTT.

The domain I, interacts with DnaA modulators stretch occupies residues 1–79 (MPNSMWHQCL…QAPRVMMKVG (79 aa)). The segment at 78 to 138 (VGSAPKPTDP…PAPKAQAERR (61 aa)) is disordered. Positions 79–150 (GSAPKPTDPV…QVEGDIKHQS (72 aa)) are domain II. A domain III, AAA+ region region spans residues 151–367 (FLNETFTFDT…GALRLVIANA (217 aa)). Gly-195, Gly-197, Lys-198, and Thr-199 together coordinate ATP. Residues 368–487 (HFTGSEITPP…YQNFMRLLTT (120 aa)) are domain IV, binds dsDNA.

The protein belongs to the DnaA family. As to quaternary structure, oligomerizes as a right-handed, spiral filament on DNA at oriC.

The protein localises to the cytoplasm. Functionally, plays an essential role in the initiation and regulation of chromosomal replication. ATP-DnaA binds to the origin of replication (oriC) to initiate formation of the DNA replication initiation complex once per cell cycle. Binds the DnaA box (a 9 base pair repeat at the origin) and separates the double-stranded (ds)DNA. Forms a right-handed helical filament on oriC DNA; dsDNA binds to the exterior of the filament while single-stranded (ss)DNA is stabiized in the filament's interior. The ATP-DnaA-oriC complex binds and stabilizes one strand of the AT-rich DNA unwinding element (DUE), permitting loading of DNA polymerase. After initiation quickly degrades to an ADP-DnaA complex that is not apt for DNA replication. Binds acidic phospholipids. The polypeptide is Chromosomal replication initiator protein DnaA (Marinobacter nauticus (strain ATCC 700491 / DSM 11845 / VT8) (Marinobacter aquaeolei)).